The chain runs to 344 residues: Dihydroorotase (344 aa).

Zn(2+) is bound by residues histidine 14 and histidine 16. Substrate is bound by residues histidine 16–arginine 18 and asparagine 42. Zn(2+) is bound by residues lysine 100, histidine 137, and histidine 175. Position 100 is an N6-carboxylysine (lysine 100). A substrate-binding site is contributed by histidine 137. Leucine 220 serves as a coordination point for substrate. Aspartate 248 contributes to the Zn(2+) binding site. Aspartate 248 is a catalytic residue. Residues histidine 252 and alanine 264 each coordinate substrate.

The protein belongs to the metallo-dependent hydrolases superfamily. DHOase family. Class II DHOase subfamily. As to quaternary structure, homodimer. Zn(2+) serves as cofactor.

It catalyses the reaction (S)-dihydroorotate + H2O = N-carbamoyl-L-aspartate + H(+). The protein operates within pyrimidine metabolism; UMP biosynthesis via de novo pathway; (S)-dihydroorotate from bicarbonate: step 3/3. Catalyzes the reversible cyclization of carbamoyl aspartate to dihydroorotate. This chain is Dihydroorotase, found in Cupriavidus metallidurans (strain ATCC 43123 / DSM 2839 / NBRC 102507 / CH34) (Ralstonia metallidurans).